Here is a 430-residue protein sequence, read N- to C-terminus: Histidinol dehydrogenase (430 aa).

Residues Y130, Q191, and N214 each contribute to the NAD(+) site. Positions 237, 259, and 262 each coordinate substrate. Q259 and H262 together coordinate Zn(2+). Active-site proton acceptor residues include E327 and H328. Substrate is bound by residues H328, D361, E415, and H420. A Zn(2+)-binding site is contributed by D361. H420 is a binding site for Zn(2+).

This sequence belongs to the histidinol dehydrogenase family. Zn(2+) serves as cofactor.

It carries out the reaction L-histidinol + 2 NAD(+) + H2O = L-histidine + 2 NADH + 3 H(+). It participates in amino-acid biosynthesis; L-histidine biosynthesis; L-histidine from 5-phospho-alpha-D-ribose 1-diphosphate: step 9/9. Its function is as follows. Catalyzes the sequential NAD-dependent oxidations of L-histidinol to L-histidinaldehyde and then to L-histidine. The protein is Histidinol dehydrogenase of Brucella suis biovar 1 (strain 1330).